The primary structure comprises 100 residues: RxLR effector protein SFI8 (100 aa).

The N-terminal stretch at 1–22 (MRSILYAVLAFAVLARSSAVAA) is a signal peptide. A RxLR-dEER motif is present at residues 43–57 (RSLRVEAQEVIQSGR). Positions 78–82 (KPDIK) match the Calmodulin-binding motif motif.

It belongs to the RxLR effector family. In terms of assembly, interacts with the host calmodulin.

It is found in the secreted. Its subcellular location is the host nucleus. It localises to the host cytoplasm. Its function is as follows. Effector that suppresses flg22-induced post-translational MAP kinase activation both tomato and Arabidopsis. The perception of highly conserved pathogen- or microbe-associated molecular patterns (PAMPs/MAMPs), such as flg22, triggers converging signaling pathways recruiting MAP kinase cascades and inducing transcriptional re-programming, yielding a generic antimicrobial response. Associates with calmodulin to interfere with plant defense-associated calcium signaling in hosts. The chain is RxLR effector protein SFI8 from Phytophthora infestans (strain T30-4) (Potato late blight agent).